The chain runs to 160 residues: Cytochrome b6-f complex subunit 4 (160 aa).

Helical transmembrane passes span 36–56, 95–115, and 128–148; these read LLYI…GLAV, LLGI…PFIE, and IAMS…IGAC.

It belongs to the cytochrome b family. PetD subfamily. In terms of assembly, the 4 large subunits of the cytochrome b6-f complex are cytochrome b6, subunit IV (17 kDa polypeptide, PetD), cytochrome f and the Rieske protein, while the 4 small subunits are PetG, PetL, PetM and PetN. The complex functions as a dimer.

Its subcellular location is the cellular thylakoid membrane. Component of the cytochrome b6-f complex, which mediates electron transfer between photosystem II (PSII) and photosystem I (PSI), cyclic electron flow around PSI, and state transitions. The chain is Cytochrome b6-f complex subunit 4 from Prochlorococcus marinus (strain MIT 9301).